A 99-amino-acid chain; its full sequence is Large ribosomal subunit protein uL23 (99 aa).

Contacts protein L29, and trigger factor when it is bound to the ribosome. Part of the 50S ribosomal subunit.

Its function is as follows. One of the early assembly proteins it binds 23S rRNA. One of the proteins that surrounds the polypeptide exit tunnel on the outside of the ribosome. Forms the main docking site for trigger factor binding to the ribosome. In Rhodopseudomonas palustris (strain ATCC BAA-98 / CGA009), this protein is Large ribosomal subunit protein uL23.